We begin with the raw amino-acid sequence, 1311 residues long: Nephrocystin-3 (1311 aa).

Positions 81 to 183 (SKNNEIASMQ…LQRLQAQGIQ (103 aa)) form a coiled coil. TPR repeat units follow at residues 889–923 (LSYW…EEKM), 927–960 (ADLY…RETA), 969–1002 (AQSL…SENA), 1011–1044 (AREL…RQKS), 1077–1110 (ARTL…RERV), 1119–1152 (AQSI…RRRA), 1161–1194 (AYTV…RQKS), 1203–1236 (ATAL…YEDS), and 1245–1278 (GETL…KETE).

The protein resides in the cell projection. Its subcellular location is the cilium. Functionally, required for normal ciliary development and function. Inhibits disheveled-1-induced canonical Wnt-signaling activity and may also play a role in the control of non-canonical Wnt signaling that regulates planar cell polarity. Probably acts as a molecular switch between different Wnt signaling pathways. Required for proper convergent extension cell movements. The sequence is that of Nephrocystin-3 (nphp3) from Xenopus tropicalis (Western clawed frog).